A 4592-amino-acid polypeptide reads, in one-letter code: Intermembrane lipid transfer protein vps13D (4592 aa).

Residues 3 to 102 form the Chorein N-terminal domain; the sequence is FESVVAEVID…SSTNVSSNYS (100 aa). 13 disordered regions span residues 95–142, 157–199, 286–307, 445–529, 574–605, 826–861, 1040–1083, 1219–1249, 1655–1717, 1855–1886, 1971–2001, 2025–2056, and 2245–2270; these read TNVS…TASQ, LDKK…IDSQ, STTSSNNNNNNNNNNTTSSSSS, KKDD…IKGI, SNSTTTNNSNNNSSSSPNILATSPSNNSLSPM, NYNNQSSSSSSSSQPPPPKPTEETSTTNKPKKQQGI, TTSP…KRQW, YFKNKRKEENEQNEGNTEDDEQEEEEQEKKP, QQQE…QQSN, SNNNNDNNNDNNNSNNSNNNNNTSNGSGNSLF, TSSLDNTSISTTTTTTTTTTTTTTTTTTTTS, PLINDNSNKSPTSKSSSSKSSSSKSSKKEQQQ, and NNNNNNNNNNNNNNNNNNNNNTNIIN. 2 stretches are compositionally biased toward low complexity: residues 117–139 and 172–199; these read SSSNNNNNNNNDSSSSSSNTTST and KSTNTTTNNNGINNSNDKNKNNNNIDSQ. Residues 437–517 are a coiled coil; the sequence is KNATIKLNKK…KKKEEKGKSK (81 aa). The segment covering 445 to 457 has biased composition (basic and acidic residues); that stretch reads KKDDKKDDKKDDI. A compositionally biased stretch (low complexity) spans 458–474; the sequence is NSSSSSIGSSNSSNNTP. Positions 475–529 are enriched in basic and acidic residues; that stretch reads TKDKNKEKEKDKEKEKEKEKKKEKEKLKLEEKKKKKEEKGKSKSKDSKKNKIKGI. Residues 574 to 591 show a composition bias toward low complexity; that stretch reads SNSTTTNNSNNNSSSSPN. Residues 592-603 are compositionally biased toward polar residues; it reads ILATSPSNNSLS. Positions 829 to 838 are enriched in low complexity; it reads NQSSSSSSSS. A compositionally biased stretch (polar residues) spans 1040–1059; that stretch reads TTSPTFNSLNNKPSTLQNNH. The segment covering 1064–1076 has biased composition (low complexity); the sequence is NGNSSNNNNTDSP. The span at 1234 to 1244 shows a compositional bias: acidic residues; sequence NTEDDEQEEEE. Low complexity-rich tracts occupy residues 1669 to 1689 and 1702 to 1715; these read KSINSKPPSPKLSLMSPLRKS and QQQQQQQQQQQQQQ. A compositionally biased stretch (low complexity) spans 2037-2048; it reads SKSSSSKSSSSK. One copy of the TPR 1 repeat lies at 2321-2354; it reads TLQINDLGANIISIGNKSTSIKCFLRSIRLSDSR. 7 disordered regions span residues 2456–2489, 2862–2882, 3006–3035, 3106–3129, 3356–3384, 3560–3580, and 3630–3679; these read KTNNNNNNNNNNYNNTNSNNNNNQEEEEKDSIST, AVSTSNNPNGSGYNNSNNNNG, GEQKGKKKSTSTSTSPTLSSQPSSSSSSSS, NSSGYNSSSPSPSSSSSPSSSSSN, KLPTSPQTSSSSSPPPATTTTSTTTKRTT, NSLKIEQGRKSKKQQQQHRHN, and STNH…SKLK. Composition is skewed to low complexity over residues 2458 to 2478, 2864 to 2880, and 3015 to 3035; these read NNNNNNNNNNYNNTNSNNNNN, STSNNPNGSGYNNSNNN, and TSTSTSPTLSSQPSSSSSSSS. Low complexity predominate over residues 3358 to 3384; that stretch reads PTSPQTSSSSSPPPATTTTSTTTKRTT. Residues 3569–3580 are compositionally biased toward basic residues; sequence KSKKQQQQHRHN. Low complexity predominate over residues 3640–3679; sequence SSTFNNSSNDNINNGNSNNNTSNSLSPPSSSSSINLSKLK. The stretch at 3789-3822 is one TPR 2 repeat; it reads EVPKPYLGRVDIKDNDTHTSIHFYDQDTEYSPFR. Low complexity-rich tracts occupy residues 3872 to 3894 and 4111 to 4135; these read TTTTTTTTNSTNDINNDNNNNNN and QQLQQNPQQQQPQQQNNEIQNNPIN. Disordered regions lie at residues 3872 to 3897 and 4105 to 4135; these read TTTTTTTTNSTNDINNDNNNNNNQYI and KKHKKNQQLQQNPQQQQPQQQNNEIQNNPIN.

The protein localises to the membrane. In terms of biological role, mediates the transfer of lipids between membranes at organelle contact sites. The sequence is that of Intermembrane lipid transfer protein vps13D (vps13D) from Dictyostelium discoideum (Social amoeba).